Consider the following 374-residue polypeptide: Cell division protein DivIB (374 aa).

Residues 1–90 (MWKISNENDI…EEEHFADRLP (90 aa)) are disordered. Residues 1–103 (MWKISNENDI…KTRNKRLYRR (103 aa)) are Cytoplasmic-facing. The segment covering 39–53 (YLKKQAEEAASKGEN) has biased composition (basic and acidic residues). A compositionally biased stretch (polar residues) spans 56 to 75 (AEVTITLQEQSQEEPQQHLP). The helical transmembrane segment at 104-124 (LAFILTCLGTAILVALYFVSP) threads the bilayer. The Extracellular segment spans residues 125 to 374 (LSRLSEVTVS…GENQEVQQAE (250 aa)). A POTRA domain is found at 126-197 (SRLSEVTVSG…NSFKIDIQEY (72 aa)). The disordered stretch occupies residues 325–374 (KESEETGSEVSEDSAVENQEVVDPNAGVATDGANNGTPTNGENQEVQQAE). Residues 326–339 (ESEETGSEVSEDSA) are compositionally biased toward acidic residues. Residues 356–374 (GANNGTPTNGENQEVQQAE) are compositionally biased toward polar residues.

The protein belongs to the FtsQ/DivIB family. DivIB subfamily.

It is found in the cell membrane. In terms of biological role, cell division protein that may be involved in stabilizing or promoting the assembly of the division complex. The chain is Cell division protein DivIB from Enterococcus faecalis (strain 62).